Here is a 163-residue protein sequence, read N- to C-terminus: SsrA-binding protein (163 aa).

Basic and acidic residues predominate over residues Arg140 to Leu157. A disordered region spans residues Arg140–Arg163.

This sequence belongs to the SmpB family.

The protein localises to the cytoplasm. Its function is as follows. Required for rescue of stalled ribosomes mediated by trans-translation. Binds to transfer-messenger RNA (tmRNA), required for stable association of tmRNA with ribosomes. tmRNA and SmpB together mimic tRNA shape, replacing the anticodon stem-loop with SmpB. tmRNA is encoded by the ssrA gene; the 2 termini fold to resemble tRNA(Ala) and it encodes a 'tag peptide', a short internal open reading frame. During trans-translation Ala-aminoacylated tmRNA acts like a tRNA, entering the A-site of stalled ribosomes, displacing the stalled mRNA. The ribosome then switches to translate the ORF on the tmRNA; the nascent peptide is terminated with the 'tag peptide' encoded by the tmRNA and targeted for degradation. The ribosome is freed to recommence translation, which seems to be the essential function of trans-translation. The protein is SsrA-binding protein of Anaeromyxobacter dehalogenans (strain 2CP-C).